The primary structure comprises 367 residues: Selenoprotein Pa (367 aa).

A signal peptide spans 1 to 19 (MWKALSLTLALCLLVGCSA). Residue selenocysteine 59 is a non-standard amino acid, selenocysteine. Asparagine 109 is a glycosylation site (N-linked (GlcNAc...) asparagine). Residues 191 to 220 (EVNKPVEEEPRQDHGHHEHGHHEHQGEAER) show a composition bias toward basic and acidic residues. Positions 191 to 241 (EVNKPVEEEPRQDHGHHEHGHHEHQGEAERHRHGHHHPHHHHHHHRGQQQV) are disordered. Positions 221–237 (HRHGHHHPHHHHHHHRG) are enriched in basic residues. Residues selenocysteine 267, selenocysteine 273, selenocysteine 279, selenocysteine 290, selenocysteine 292, selenocysteine 294, selenocysteine 310, selenocysteine 320, selenocysteine 322, selenocysteine 336, selenocysteine 338, selenocysteine 346, selenocysteine 353, selenocysteine 355, selenocysteine 362, and selenocysteine 364 are each a non-standard amino acid (selenocysteine). Positions 309–367 (LUHCDEPLPASUPUQGLKEQDNHIKETUQURPAPPAEUELSQPTUVUPAGDATUGURKK) are disordered. The span at 326–336 (KEQDNHIKETU) shows a compositional bias: basic and acidic residues.

The protein belongs to the selenoprotein P family.

The protein localises to the secreted. Its function is as follows. Might be responsible for some of the extracellular antioxidant defense properties of selenium or might be involved in the transport of selenium. This chain is Selenoprotein Pa (sepp1a), found in Danio rerio (Zebrafish).